Reading from the N-terminus, the 259-residue chain is Thiazole synthase (259 aa).

Lysine 99 serves as the catalytic Schiff-base intermediate with DXP. Residues glycine 160, 186 to 187 (AG), and 208 to 209 (NT) contribute to the 1-deoxy-D-xylulose 5-phosphate site.

Belongs to the ThiG family. Homotetramer. Forms heterodimers with either ThiH or ThiS.

Its subcellular location is the cytoplasm. The catalysed reaction is [ThiS sulfur-carrier protein]-C-terminal-Gly-aminoethanethioate + 2-iminoacetate + 1-deoxy-D-xylulose 5-phosphate = [ThiS sulfur-carrier protein]-C-terminal Gly-Gly + 2-[(2R,5Z)-2-carboxy-4-methylthiazol-5(2H)-ylidene]ethyl phosphate + 2 H2O + H(+). Its pathway is cofactor biosynthesis; thiamine diphosphate biosynthesis. Catalyzes the rearrangement of 1-deoxy-D-xylulose 5-phosphate (DXP) to produce the thiazole phosphate moiety of thiamine. Sulfur is provided by the thiocarboxylate moiety of the carrier protein ThiS. In vitro, sulfur can be provided by H(2)S. This chain is Thiazole synthase, found in Porphyromonas gingivalis (strain ATCC 33277 / DSM 20709 / CIP 103683 / JCM 12257 / NCTC 11834 / 2561).